The following is a 453-amino-acid chain: AP-4 complex subunit mu-1 (453 aa).

One can recognise an MHD domain in the interval 184–452; sequence KNEVFLDVVE…LSHSDAYVIR (269 aa).

This sequence belongs to the adaptor complexes medium subunit family. In terms of assembly, adaptor protein complex 4 (AP-4) is a heterotetramer composed of two large adaptins (epsilon-type subunit AP4E1 and beta-type subunit AP4B1), a medium adaptin (mu-type subunit AP4M1) and a small adaptin (sigma-type AP4S1). Interacts with tyrosine-based sorting signals on the cytoplasmic tail of cargo proteins such as APP, ATG9A, LAMP2 and NAGPA. Interacts with the C-terminal domain of GRID2. Interacts with GRIA1 and GRIA2; the interaction is indirect via CACNG3. Interacts with CACNG3; CACNG3 associates GRIA1 and GRIA2 with the adaptor protein complex 4 (AP-4) to target them to the somatodendritic compartment of neurons. Interacts with HOOK1 and HOOK2; the interactions are direct, mediate the interaction between FTS-Hook-FHIP (FHF) complex and AP-4 and the perinuclear distribution of AP-4. As to expression, ubiquitous. Highly expressed in testis and lowly expressed in brain and lung.

It is found in the golgi apparatus. The protein resides in the trans-Golgi network membrane. The protein localises to the early endosome. Component of the adaptor protein complex 4 (AP-4). Adaptor protein complexes are vesicle coat components involved both in vesicle formation and cargo selection. They control the vesicular transport of proteins in different trafficking pathways. AP-4 forms a non clathrin-associated coat on vesicles departing the trans-Golgi network (TGN) and may be involved in the targeting of proteins from the trans-Golgi network (TGN) to the endosomal-lysosomal system. It is also involved in protein sorting to the basolateral membrane in epithelial cells and the proper asymmetric localization of somatodendritic proteins in neurons. Within AP-4, the mu-type subunit AP4M1 is directly involved in the recognition and binding of tyrosine-based sorting signals found in the cytoplasmic part of cargos. The adaptor protein complex 4 (AP-4) may also recognize other types of sorting signal. This is AP-4 complex subunit mu-1 from Homo sapiens (Human).